We begin with the raw amino-acid sequence, 542 residues long: MSKVDKTGYAQWVYLLPERSSMMSFIDSMEDFRFDMLIYFLCFVVLGRAVQWFLRPKPNAPLLNPRRFFEFSDSRAVSEILYSTRQVLEDWFSKYPTKPMRIIADLGQITILPPSMADEIKNDPRLSFIKASTESAFHITIPGFEPFREGAKNEAGLIKNVLHKHLNKTLNHITTPLAEETCLAVQEYFGSDQGWHKVPLRDTLVPLVTRISTRIFLGQDLCRNQEWLRIAASYSSTSAEVANHLRRWPKPLRYLVSLLSPECQNLAKQVRNARALINPILERRRVEEGQEKGTSYNDSLEWFERYAREAYDPAATQLFLSVVSIHTTTDLLCQALEDISSHPEIIKPLQHEIREVLKQEGWNTKALYKMKLLDSVLKESQRLKPVQHATMLRLALEDITLEDGTFIPKGHQISVSCHAMRDNEIYENASSWDGYRYYRQREQSANEHKAQLSSTSPEHMGFGYGIHVCPGRFFAANEVKVIMIYLLLQYEWRTPPGSQPKPLSWCTTWATDPTFELEVRRKGSDDIPVELSHNTFSRESES.

Residues 37-54 traverse the membrane as a helical segment; that stretch reads LIYFLCFVVLGRAVQWFL. Asn167, Asn297, and Asn428 each carry an N-linked (GlcNAc...) asparagine glycan. Cys469 serves as a coordination point for heme.

This sequence belongs to the cytochrome P450 family. Heme serves as cofactor.

The protein localises to the membrane. It functions in the pathway sesquiterpene biosynthesis; trichothecene biosynthesis. In terms of biological role, cytochrome P450 monooxygenase; part of 2-gene cluster involved in trichothecene C-8 modification that mediates the biosynthesis of T2-toxin. The biosynthesis of trichothecenes begins with the cyclization of farnesyl diphosphate to trichodiene and is catalyzed by the trichodiene synthase TRI5. Trichodiene undergoes a series of oxygenations catalyzed by the cytochrome P450 monooxygenase TRI4. TRI4 controls the addition of four oxygens at C-2, C-3, C-11, and the C-12, C-13-epoxide to form the intermediate isotrichotriol. Isotrichotriol then undergoes a non-enzymatic isomerization and cyclization to form isotrichodermol. During this process, the oxygen at the C-2 position becomes the pyran ring oxygen and the hydroxyl group at C-11 is lost. More complex type A trichothecenes are built by modifying isotrichodermol through a series of paired hydroxylation and acetylation or acylation steps. Isotrichodermol is converted to isotrichodermin by the acetyltransferase TRI101. TRI101 encodes a C-3 transacetylase that acts as a self-protection or resistance factor during biosynthesis and that the presence of a free C-3 hydroxyl group is a key component of Fusarium trichothecene phytotoxicity. A second hydroxyl group is added to C-15 by the trichothecene C-15 hydroxylase TRI11, producing 15-decalonectrin, which is then acetylated by TRI3, producing calonectrin. A third hydroxyl group is added at C-4 by the cytochrome P450 monooxygenase TRI13, converting calonectrin to 3,15-diacetoxyspirpenol, which is subsequently acetylated by the acetyltransferase TRI7. A fourth hydroxyl group is added to C-8 by the cytochrome P450 monooxygenase TRI1, followed by the addition of an isovaleryl moiety by TRI16. Finally, the acetyl group is removed from the C-3 position by the trichothecene C-3 esterase TRI8 to produce T-2 toxin. The protein is Cytochrome P450 monooxygenase TRI1 of Fusarium sporotrichioides.